Here is a 555-residue protein sequence, read N- to C-terminus: Urocanate hydratase (555 aa).

NAD(+) contacts are provided by residues 53-54 (GG), glutamine 131, 177-179 (GMG), glutamate 197, arginine 202, 243-244 (NA), 264-268 (QTSAH), 274-275 (YL), and tyrosine 323. Cysteine 411 is a catalytic residue. NAD(+) is bound at residue glycine 493.

This sequence belongs to the urocanase family. The cofactor is NAD(+).

The protein localises to the cytoplasm. It carries out the reaction 4-imidazolone-5-propanoate = trans-urocanate + H2O. The protein operates within amino-acid degradation; L-histidine degradation into L-glutamate; N-formimidoyl-L-glutamate from L-histidine: step 2/3. Catalyzes the conversion of urocanate to 4-imidazolone-5-propionate. The polypeptide is Urocanate hydratase (Maricaulis maris (strain MCS10) (Caulobacter maris)).